The sequence spans 186 residues: Transcription factor HES-3 (186 aa).

Residues 1-49 (MEKKRRARINVSLEQLKSLLEKHYSHQIRKRKLEKADILELSVKYMRSL) enclose the bHLH domain. Positions 65–99 (QPSGFRSCLPGVSQLLRRGDEVGSGLRCPLVPESA) constitute an Orange domain. The segment at 128-186 (APAAGGPRSPPPLLLLPESLPGSSASVPPPQPASSRCAESPGLGLRVWRPWGSPGDDLN) is disordered. A compositionally biased stretch (low complexity) spans 142-153 (LLPESLPGSSAS). The short motif at 175–178 (WRPW) is the WRPW motif element.

In terms of assembly, transcription repression requires formation of a complex with a corepressor protein of the Groucho/TLE family.

The protein resides in the nucleus. In terms of biological role, transcriptional repressor of genes that require a bHLH protein for their transcription. This chain is Transcription factor HES-3 (HES3), found in Homo sapiens (Human).